The sequence spans 103 residues: Large ribosomal subunit protein uL24 (103 aa).

It belongs to the universal ribosomal protein uL24 family. As to quaternary structure, part of the 50S ribosomal subunit.

Its function is as follows. One of two assembly initiator proteins, it binds directly to the 5'-end of the 23S rRNA, where it nucleates assembly of the 50S subunit. In terms of biological role, one of the proteins that surrounds the polypeptide exit tunnel on the outside of the subunit. The chain is Large ribosomal subunit protein uL24 from Christiangramia forsetii (strain DSM 17595 / CGMCC 1.15422 / KT0803) (Gramella forsetii).